Reading from the N-terminus, the 267-residue chain is 2-keto-3-deoxy-L-rhamnonate aldolase (267 aa).

The active-site Proton acceptor is His49. Position 151 (Gln151) interacts with substrate. Glu153 serves as a coordination point for Mg(2+). 2 residues coordinate substrate: Ala178 and Asp179. Residue Asp179 coordinates Mg(2+).

Belongs to the HpcH/HpaI aldolase family. KDR aldolase subfamily. Homohexamer. It depends on Mg(2+) as a cofactor.

The enzyme catalyses 2-dehydro-3-deoxy-L-rhamnonate = (S)-lactaldehyde + pyruvate. Functionally, catalyzes the reversible retro-aldol cleavage of 2-keto-3-deoxy-L-rhamnonate (KDR) to pyruvate and lactaldehyde. The sequence is that of 2-keto-3-deoxy-L-rhamnonate aldolase from Shigella sonnei (strain Ss046).